The following is a 407-amino-acid chain: Probable tRNA pseudouridine synthase D (407 aa).

D81 acts as the Nucleophile in catalysis. The 222-residue stretch at G151 to R372 folds into the TRUD domain.

Belongs to the pseudouridine synthase TruD family.

The catalysed reaction is uridine(13) in tRNA = pseudouridine(13) in tRNA. Could be responsible for synthesis of pseudouridine from uracil-13 in transfer RNAs. This chain is Probable tRNA pseudouridine synthase D, found in Pyrococcus furiosus (strain ATCC 43587 / DSM 3638 / JCM 8422 / Vc1).